A 289-amino-acid chain; its full sequence is Glyoxylate/succinic semialdehyde reductase 1 (289 aa).

M1 carries the post-translational modification N-acetylmethionine. NADP(+) contacts are provided by residues 4-18 (GFLGLGIMGKAMSMN) and T95. Residue K170 is part of the active site. K238 is an NADP(+) binding site.

It belongs to the HIBADH-related family. NP60 subfamily.

The protein localises to the cytoplasm. Its subcellular location is the cytosol. It carries out the reaction glycolate + NADP(+) = glyoxylate + NADPH + H(+). The catalysed reaction is 4-hydroxybutanoate + NADP(+) = succinate semialdehyde + NADPH + H(+). With respect to regulation, the ratio of NADPH/NADP(+) may regulate enzymatic activity. In terms of biological role, catalyzes the NADPH-dependent reduction of glyoxylate to glycolate as well as succinic semialdehyde (SSA) to gamma-hydroxybutyrate in vitro. May function in redox homeostasis and play a role in oxidative stress tolerance by detoxifying glyoxylate and SSA generated in glycolate metabolism and GABA metabolism, respectively. This chain is Glyoxylate/succinic semialdehyde reductase 1 (GLYR1), found in Arabidopsis thaliana (Mouse-ear cress).